Consider the following 30-residue polypeptide: Snaclec coagulation factor IX/factor X-binding protein subunit B (30 aa).

Cys-2 and Cys-13 form a disulfide bridge. In terms of domain architecture, C-type lectin spans 9–30; the sequence is YEGHCYRVFTEPQNWADAEKFC.

It belongs to the snaclec family. In terms of assembly, heterodimer of subunits A and B; disulfide-linked. Post-translationally, glycosylated. In terms of tissue distribution, expressed by the venom gland.

The protein resides in the secreted. Its function is as follows. Anticoagulant protein which binds to the gamma-carboxyglutamic acid-domain regions of factors IX (F9) and factor X (F10) in the presence of calcium with a 1 to 1 stoichiometry. This chain is Snaclec coagulation factor IX/factor X-binding protein subunit B, found in Bothrops jararaca (Jararaca).